A 352-amino-acid polypeptide reads, in one-letter code: Inorganic triphosphatase (352 aa).

In terms of domain architecture, CYTH spans 6–203; it reads LQEIELKLAI…KRGYLLGSKQ (198 aa).

It catalyses the reaction triphosphate + H2O = phosphate + diphosphate. Functionally, involved in the hydrolysis of the beta-gamma-phosphoanhydride linkage of triphosphate-containing substrates (inorganic or nucleoside-linked). Catalyzes the hydrolysis of inorganic triphosphate (PPPi), which could be cytotoxic because of its high affinity for calcium ion, thereby interfering with calcium signaling. In Haemophilus influenzae (strain ATCC 51907 / DSM 11121 / KW20 / Rd), this protein is Inorganic triphosphatase.